The sequence spans 399 residues: Elongation factor Tu (399 aa).

The tr-type G domain occupies 10–204; the sequence is KPHVNIGTIG…AVDASIPEPE (195 aa). Residues 19–26 are G1; the sequence is GHVDHGKT. 19–26 contacts GTP; that stretch reads GHVDHGKT. Position 26 (threonine 26) interacts with Mg(2+). Residues 60-64 form a G2 region; sequence GITIN. The G3 stretch occupies residues 81 to 84; it reads DCPG. Residues 81–85 and 136–139 contribute to the GTP site; these read DCPGH and NKCD. The interval 136–139 is G4; that stretch reads NKCD. Residues 174 to 176 form a G5 region; the sequence is SGL.

This sequence belongs to the TRAFAC class translation factor GTPase superfamily. Classic translation factor GTPase family. EF-Tu/EF-1A subfamily. As to quaternary structure, monomer.

The protein localises to the cytoplasm. It catalyses the reaction GTP + H2O = GDP + phosphate + H(+). In terms of biological role, GTP hydrolase that promotes the GTP-dependent binding of aminoacyl-tRNA to the A-site of ribosomes during protein biosynthesis. This is Elongation factor Tu from Prochlorococcus marinus subsp. pastoris (strain CCMP1986 / NIES-2087 / MED4).